The sequence spans 302 residues: Recombination-associated protein RdgC (302 aa).

Belongs to the RdgC family.

It is found in the cytoplasm. The protein localises to the nucleoid. Functionally, may be involved in recombination. The polypeptide is Recombination-associated protein RdgC (Actinobacillus pleuropneumoniae serotype 3 (strain JL03)).